Reading from the N-terminus, the 439-residue chain is Phosphoribosylamine--glycine ligase (439 aa).

Positions 109-317 constitute an ATP-grasp domain; it reads REFMERNKIP…LVEISERIID (209 aa). 136–195 serves as a coordination point for ATP; the sequence is IDEFGKPVVVKPLGLTGGKGVKVVGYQLKDNEEAKEYAEYLIRKDGKVLIEERTDGVEFT. Mg(2+) contacts are provided by glutamine 275, glutamate 287, and asparagine 289. The Mn(2+) site is built by glutamine 275, glutamate 287, and asparagine 289.

Belongs to the GARS family. Mg(2+) serves as cofactor. The cofactor is Mn(2+).

It carries out the reaction 5-phospho-beta-D-ribosylamine + glycine + ATP = N(1)-(5-phospho-beta-D-ribosyl)glycinamide + ADP + phosphate + H(+). Its pathway is purine metabolism; IMP biosynthesis via de novo pathway; N(1)-(5-phospho-D-ribosyl)glycinamide from 5-phospho-alpha-D-ribose 1-diphosphate: step 2/2. The protein is Phosphoribosylamine--glycine ligase of Pyrococcus furiosus (strain ATCC 43587 / DSM 3638 / JCM 8422 / Vc1).